Consider the following 58-residue polypeptide: MTGSGTPPSREVNTYYMTMTMTMTMIMIMTMTMNIHFNNNNNNNINMNSRRMYLFILM.

The protein resides in the mitochondrion. This is an uncharacterized protein from Saccharomyces cerevisiae (strain ATCC 204508 / S288c) (Baker's yeast).